The chain runs to 987 residues: VPS35 endosomal protein sorting factor-like (987 aa).

The span at 1 to 23 shows a compositional bias: low complexity; the sequence is MAERQSASSPTPSSPPQQQQQTP. Positions 1-115 are disordered; the sequence is MAERQSASSP…DPLNNPLEKK (115 aa). Residues 43-63 are compositionally biased toward basic and acidic residues; sequence NGREVERHPLNSITKTEDTGK. The span at 66 to 111 shows a compositional bias: low complexity; it reads QSSLSSNASSLQSAAAAASSSTATTDIDPLNNNNNNNTDIDPLNNP.

This sequence belongs to the VPS35L family. As to quaternary structure, component of the heterotrimeric retriever complex.

Its subcellular location is the endosome. Functionally, acts as a component of the retriever complex. The retriever complex is a heterotrimeric complex related to retromer cargo-selective complex (CSC) and essential for retromer-independent retrieval and recycling of numerous cargos. This Dictyostelium discoideum (Social amoeba) protein is VPS35 endosomal protein sorting factor-like.